A 1573-amino-acid chain; its full sequence is Pentafunctional AROM polypeptide 1 (1573 aa).

Positions 1–380 (MAEPTKISIL…YEPKASVVSN (380 aa)) are 3-dehydroquinate synthase. Residues 44–46 (DTN), 81–84 (ENSK), 112–114 (GGV), and aspartate 117 each bind NAD(+). Arginine 128 provides a ligand contact to 7-phospho-2-dehydro-3-deoxy-D-arabino-heptonate. An NAD(+)-binding site is contributed by 137–138 (TT). 7-phospho-2-dehydro-3-deoxy-D-arabino-heptonate-binding residues include aspartate 144 and lysine 150. Lysine 159 is an NAD(+) binding site. Residue asparagine 160 coordinates 7-phospho-2-dehydro-3-deoxy-D-arabino-heptonate. NAD(+)-binding positions include 177–180 (FIDT) and asparagine 188. Residue glutamate 192 coordinates Zn(2+). 7-phospho-2-dehydro-3-deoxy-D-arabino-heptonate is bound by residues 192 to 195 (EVIK) and lysine 246. Glutamate 256 serves as the catalytic Proton acceptor; for 3-dehydroquinate synthase activity. 7-phospho-2-dehydro-3-deoxy-D-arabino-heptonate-binding positions include 260–264 (RNLLN) and histidine 267. Position 267 (histidine 267) interacts with Zn(2+). The active-site Proton acceptor; for 3-dehydroquinate synthase activity is histidine 271. 7-phospho-2-dehydro-3-deoxy-D-arabino-heptonate contacts are provided by histidine 283 and lysine 352. Histidine 283 provides a ligand contact to Zn(2+). An EPSP synthase region spans residues 393-838 (VIPGVPKDLN…WDALKQKFGV (446 aa)). The For EPSP synthase activity role is filled by cysteine 820. The shikimate kinase stretch occupies residues 859 to 1051 (DASIVIIGMR…RRKRLSFFMS (193 aa)). Position 866–873 (866–873 (GMRGAGKT)) interacts with ATP. The interval 1052-1273 (LTLTDLRDSG…AAPGQLSAAE (222 aa)) is 3-dehydroquinase. Histidine 1175 acts as the Proton acceptor; for 3-dehydroquinate dehydratase activity in catalysis. Lysine 1203 serves as the catalytic Schiff-base intermediate with substrate; for 3-dehydroquinate dehydratase activity. The tract at residues 1286-1573 (AKKFAIFGKP…NAVLGTDETK (288 aa)) is shikimate dehydrogenase.

It in the N-terminal section; belongs to the sugar phosphate cyclases superfamily. Dehydroquinate synthase family. This sequence in the 2nd section; belongs to the EPSP synthase family. In the 3rd section; belongs to the shikimate kinase family. The protein in the 4th section; belongs to the type-I 3-dehydroquinase family. It in the C-terminal section; belongs to the shikimate dehydrogenase family. As to quaternary structure, homodimer. Zn(2+) serves as cofactor.

It is found in the cytoplasm. It carries out the reaction 7-phospho-2-dehydro-3-deoxy-D-arabino-heptonate = 3-dehydroquinate + phosphate. It catalyses the reaction 3-dehydroquinate = 3-dehydroshikimate + H2O. The enzyme catalyses shikimate + NADP(+) = 3-dehydroshikimate + NADPH + H(+). The catalysed reaction is shikimate + ATP = 3-phosphoshikimate + ADP + H(+). It carries out the reaction 3-phosphoshikimate + phosphoenolpyruvate = 5-O-(1-carboxyvinyl)-3-phosphoshikimate + phosphate. The protein operates within metabolic intermediate biosynthesis; chorismate biosynthesis; chorismate from D-erythrose 4-phosphate and phosphoenolpyruvate: step 2/7. It functions in the pathway metabolic intermediate biosynthesis; chorismate biosynthesis; chorismate from D-erythrose 4-phosphate and phosphoenolpyruvate: step 3/7. Its pathway is metabolic intermediate biosynthesis; chorismate biosynthesis; chorismate from D-erythrose 4-phosphate and phosphoenolpyruvate: step 4/7. It participates in metabolic intermediate biosynthesis; chorismate biosynthesis; chorismate from D-erythrose 4-phosphate and phosphoenolpyruvate: step 5/7. The protein operates within metabolic intermediate biosynthesis; chorismate biosynthesis; chorismate from D-erythrose 4-phosphate and phosphoenolpyruvate: step 6/7. The AROM polypeptide catalyzes 5 consecutive enzymatic reactions in prechorismate polyaromatic amino acid biosynthesis. This chain is Pentafunctional AROM polypeptide 1, found in Talaromyces marneffei (strain ATCC 18224 / CBS 334.59 / QM 7333) (Penicillium marneffei).